Reading from the N-terminus, the 552-residue chain is Chaperonin GroEL 1 (552 aa).

ATP contacts are provided by residues threonine 30–proline 33, lysine 51, aspartate 87–threonine 91, glycine 415, asparagine 479–alanine 481, and aspartate 495.

Belongs to the chaperonin (HSP60) family. In terms of assembly, forms a cylinder of 14 subunits composed of two heptameric rings stacked back-to-back. Interacts with the co-chaperonin GroES.

The protein resides in the cytoplasm. The enzyme catalyses ATP + H2O + a folded polypeptide = ADP + phosphate + an unfolded polypeptide.. In terms of biological role, together with its co-chaperonin GroES, plays an essential role in assisting protein folding. The GroEL-GroES system forms a nano-cage that allows encapsulation of the non-native substrate proteins and provides a physical environment optimized to promote and accelerate protein folding. The sequence is that of Chaperonin GroEL 1 from Albidiferax ferrireducens (strain ATCC BAA-621 / DSM 15236 / T118) (Rhodoferax ferrireducens).